A 297-amino-acid polypeptide reads, in one-letter code: Endonuclease G, mitochondrial (297 aa).

A mitochondrion-targeting transit peptide spans 1–48; it reads MRALRAGLTLASGAGLGAVVEGWRRRREDARAAPGLLGRLPVLPVAAA. Thr128 carries the phosphothreonine; by GSK3-beta modification. His141 serves as the catalytic Proton acceptor. Position 172 (Asn172) interacts with Mg(2+). Residues 286–296 form an essential for deoxyribonuclease activity region; that stretch reads AGSLKAITAGS. Ser288 carries the post-translational modification Phosphoserine; by GSK3-beta.

This sequence belongs to the DNA/RNA non-specific endonuclease family. Homodimer; disulfide-linked. Homodimerization is essential for enzyme activity. Interacts with YWHAG. Mg(2+) serves as cofactor. In terms of processing, GSK3-beta-mediated dual phosphorylations at Thr-128 and Ser-288 is necessary for its interaction with YWHAG and the induction of autophagy.

The protein resides in the mitochondrion. Its function is as follows. Endonuclease that preferentially catalyzes the cleavage of double-stranded 5-hydroxymethylcytosine (5hmC)-modified DNA. The 5hmC-modified nucleotide does not increase the binding affinity, but instead increases the efficiency of cutting and specifies the site of cleavage for the modified DNAs. Shows significantly higher affinity for four-stranded Holliday junction over duplex and single-stranded DNAs. Promotes conservative recombination when the DNA is 5hmC-modified. Promotes autophagy through the suppression of mTOR by its phosphorylation-mediated interaction with YWHAG and its endonuclease activity-mediated DNA damage response. GSK3-beta mediated phosphorylation of ENDOG enhances its interaction with YWHAG, leading to the release of TSC2 and PIK3C3 from YWHAG resulting in mTOR pathway suppression and autophagy initiation. Promotes cleavage of mtDNA in response to oxidative and nitrosative stress, in turn inducing compensatory mtDNA replication. This Homo sapiens (Human) protein is Endonuclease G, mitochondrial (ENDOG).